Here is a 78-residue protein sequence, read N- to C-terminus: MDCCTESACSKPDDDILDIPLDDPGANAAAAKIQASFRGHMARKKIKSGERGRKGPGPGGPGGAGGARGGAGGGPSGD.

Met-1 carries the N-acetylmethionine modification. Residues 26 to 49 (ANAAAAKIQASFRGHMARKKIKSG) enclose the IQ domain. Ser-36 bears the Phosphoserine; by PHK and PKC mark. The tract at residues 38 to 78 (RGHMARKKIKSGERGRKGPGPGGPGGAGGARGGAGGGPSGD) is disordered. Residues 50-78 (ERGRKGPGPGGPGGAGGARGGAGGGPSGD) enclose the Collagen-like domain. Residues 55-78 (GPGPGGPGGAGGARGGAGGGPSGD) show a composition bias toward gly residues. Arg-68 bears the Citrulline; partial mark. Arg-68 carries the post-translational modification Omega-N-methylarginine.

This sequence belongs to the neurogranin family. The N-terminus is blocked. In terms of processing, phosphorylated at Ser-36 by PHK and PKC. Phosphorylation prevents interaction with Calmodulin and interrupts several learning- and memory-associated functions. As to expression, is highly enriched in brain. Accumulates postsynaptically in dendritic spines of neostriatal neurons.

Functionally, acts as a 'third messenger' substrate of protein kinase C-mediated molecular cascades during synaptic development and remodeling. Binds to calmodulin in the absence of calcium. The polypeptide is Neurogranin (NRGN) (Bos taurus (Bovine)).